The chain runs to 140 residues: uncharacterized protein (140 aa).

This is an uncharacterized protein from Escherichia coli (strain K12).